The sequence spans 81 residues: U10-myrmicitoxin-Mri1b (81 aa).

Residues 1–26 (MRLSYISLTLAIIFVMAIVHAPETEA) form the signal peptide. The propeptide occupies 27 to 52 (KAYPEADAVAEAIAVGEADAVGVADP). Residue V80 is modified to Valine amide.

It belongs to the formicidae venom precursor-01 superfamily. Expressed by the venom gland.

Its subcellular location is the secreted. Its function is as follows. Induces paralysis after injection into blowflies (L.caesar), and then death within 24 hours. May have antimicrobial properties, like most ant linear peptides. This chain is U10-myrmicitoxin-Mri1b, found in Manica rubida (European giant red ant).